The primary structure comprises 128 residues: MEIGKKYELNPHRIKSFIDISSSNANMVGIIQENGGWFEVKSILSLDGFDYVTEIICANGEIYNDDGMGDDYFELSEEEFYCFREYKEPTSEEDKVEDKVSDVTKIHCIVDENNVDEIIELLRKTFKA.

This is an uncharacterized protein from Enterobacteria phage LZ3 (Bacteriophage LZ3).